The sequence spans 74 residues: Protein krueppel (74 aa).

4 consecutive C2H2-type zinc fingers follow at residues 1 to 4 (ERTH), 10 to 32 (FECS…MRLH), 38 to 60 (YHCT…LRVH), and 66 to 74 (YACELCASR).

Belongs to the krueppel C2H2-type zinc-finger protein family.

It is found in the nucleus. Its function is as follows. Krueppel is a gap class segmentation protein. The sequence is that of Protein krueppel (Kr) from Euscelis plebejus (Leafhopper).